Here is a 236-residue protein sequence, read N- to C-terminus: Small ribosomal subunit protein uS3 (236 aa).

The KH type-2 domain occupies 39–107 (IREFLTEELK…DTSLNIVEVR (69 aa)). The tract at residues 214–236 (ASERRAVEGDNQGSSSNRRRENA) is disordered.

It belongs to the universal ribosomal protein uS3 family. In terms of assembly, part of the 30S ribosomal subunit. Forms a tight complex with proteins S10 and S14.

Functionally, binds the lower part of the 30S subunit head. Binds mRNA in the 70S ribosome, positioning it for translation. The chain is Small ribosomal subunit protein uS3 from Brucella abortus (strain S19).